Reading from the N-terminus, the 337-residue chain is ATP-dependent 6-phosphofructokinase (337 aa).

Glycine 11 lines the ATP pocket. 21 to 25 (RAVVR) contacts ADP. ATP-binding positions include 72–73 (RY) and 102–105 (GDGS). Aspartate 103 lines the Mg(2+) pocket. Substrate is bound at residue 125–127 (TID). The active-site Proton acceptor is aspartate 127. Residue arginine 154 participates in ADP binding. Substrate-binding positions include arginine 162 and 169–171 (MGR). Residues 185–187 (GAD), lysine 212, and 214–216 (KNH) contribute to the ADP site. Substrate-binding positions include glutamate 223, arginine 245, and 251 to 254 (HILR).

This sequence belongs to the phosphofructokinase type A (PFKA) family. ATP-dependent PFK group I subfamily. Prokaryotic clade 'B1' sub-subfamily. As to quaternary structure, homotetramer. Mg(2+) is required as a cofactor.

The protein resides in the cytoplasm. It carries out the reaction beta-D-fructose 6-phosphate + ATP = beta-D-fructose 1,6-bisphosphate + ADP + H(+). The protein operates within carbohydrate degradation; glycolysis; D-glyceraldehyde 3-phosphate and glycerone phosphate from D-glucose: step 3/4. Allosterically activated by ADP and other diphosphonucleosides, and allosterically inhibited by phosphoenolpyruvate. Its function is as follows. Catalyzes the phosphorylation of D-fructose 6-phosphate to fructose 1,6-bisphosphate by ATP, the first committing step of glycolysis. This is ATP-dependent 6-phosphofructokinase from Streptococcus pyogenes serotype M1.